The primary structure comprises 266 residues: MRLIPLKDTAQVGKWAARHIVQRINAFKPTAERPFVLGLPTGGTPLEAYKHLIAMHKAGEVSFKHVVTFNMDEYVGLPQEHPESYHTFMYRNFFDHVDIPSENINLLNGNAPDVDAECRQYEAKIKSYGKINLFMGGVGIDGHIAFNEPASSLASRTRIKTLTEDTRIANSRFFGGDVSLVPKFALTVGVGTLLDAEEVMILVTGHAKAQALEAAVEGNINHMWTISCLQLHAKAVVVCDEPSTMELKVKTVKYFRELEAESVKSL.

The active-site Proton acceptor; for enolization step is aspartate 72. Aspartate 141 (for ring-opening step) is an active-site residue. The active-site Proton acceptor; for ring-opening step is histidine 143. Glutamate 148 serves as the catalytic For ring-opening step.

Belongs to the glucosamine/galactosamine-6-phosphate isomerase family. NagB subfamily. In terms of assembly, homohexamer.

It catalyses the reaction alpha-D-glucosamine 6-phosphate + H2O = beta-D-fructose 6-phosphate + NH4(+). It functions in the pathway amino-sugar metabolism; N-acetylneuraminate degradation; D-fructose 6-phosphate from N-acetylneuraminate: step 5/5. With respect to regulation, allosterically activated by N-acetylglucosamine 6-phosphate (GlcNAc6P). In terms of biological role, catalyzes the reversible isomerization-deamination of glucosamine 6-phosphate (GlcN6P) to form fructose 6-phosphate (Fru6P) and ammonium ion. In Serratia proteamaculans (strain 568), this protein is Glucosamine-6-phosphate deaminase.